The sequence spans 498 residues: Protein flp (498 aa).

A run of 4 helical transmembrane segments spans residues 6–26 (LYFL…IYIT), 389–409 (FNIV…FSAY), 433–453 (LSLC…YLIL), and 471–491 (LALI…LLFL).

The protein resides in the cell membrane. Its precise function is unknown. Has no penicillin-binding activity and is not involved in methicillin resistance. The sequence is that of Protein flp (flp) from Staphylococcus aureus (strain COL).